Reading from the N-terminus, the 400-residue chain is Subtilisin-like protease 11 (400 aa).

The signal sequence occupies residues 1-19; sequence MGLFTVVFTAIAALSAVDA. Positions 20–117 are excised as a propeptide; the sequence is AELLRSPNSK…VEHDRYVYID (98 aa). In terms of domain architecture, Inhibitor I9 spans 35-116; the sequence is SYLVVMKDSV…FVEHDRYVYI (82 aa). One can recognise a Peptidase S8 domain in the interval 127-400; that stretch reads SWGLGRVSHR…NKLLYNGSGQ (274 aa). Asn-138 is a glycosylation site (N-linked (GlcNAc...) asparagine). Residues Asp-159 and His-191 each act as charge relay system in the active site. N-linked (GlcNAc...) asparagine glycans are attached at residues Asn-252, Asn-336, and Asn-337. The active-site Charge relay system is Ser-346. 2 N-linked (GlcNAc...) asparagine glycosylation sites follow: Asn-388 and Asn-396.

This sequence belongs to the peptidase S8 family.

The protein localises to the secreted. Its function is as follows. Secreted subtilisin-like serine protease with keratinolytic activity that contributes to pathogenicity. This is Subtilisin-like protease 11 (SUB11) from Arthroderma gypseum (strain ATCC MYA-4604 / CBS 118893) (Microsporum gypseum).